The following is a 738-amino-acid chain: AP-4 complex subunit beta-1 (738 aa).

The segment at 534 to 600 (CSPKSDPSLG…NASFATSGHL (67 aa)) is hinge. The segment at 601-738 (ISEENKEGAQ…VIGTVGDIKS (138 aa)) is ear; mediates interaction with TEPSIN.

This sequence belongs to the adaptor complexes large subunit family. In terms of assembly, adaptor protein complex 4 (AP-4) is a heterotetramer composed of two large adaptins (epsilon-type subunit AP4E1 and beta-type subunit AP4B1), a medium adaptin (mu-type subunit AP4M1) and a small adaptin (sigma-type AP4S1). Interacts with TEPSIN; this interaction requires the presence of a functional AP-4 complex. Interacts with GRIA2; probably indirect it mediates the somatodendritic localization of GRIA2 in neurons.

The protein resides in the golgi apparatus. It is found in the trans-Golgi network membrane. Component of the adaptor protein complex 4 (AP-4). Adaptor protein complexes are vesicle coat components involved both in vesicle formation and cargo selection. They control the vesicular transport of proteins in different trafficking pathways. AP-4 forms a non clathrin-associated coat on vesicles departing the trans-Golgi network (TGN) and may be involved in the targeting of proteins from the trans-Golgi network (TGN) to the endosomal-lysosomal system. It is also involved in protein sorting to the basolateral membrane in epithelial cells and the proper asymmetric localization of somatodendritic proteins in neurons. AP-4 is involved in the recognition and binding of tyrosine-based sorting signals found in the cytoplasmic part of cargos, but may also recognize other types of sorting signal. The polypeptide is AP-4 complex subunit beta-1 (Mus musculus (Mouse)).